The chain runs to 83 residues: MSSGGLLLLLGLLTLWEALTPVSSTDRPEFCELPEDSGPCKGLFHVFYYNPDQSQCLEFIYGGCYGNANNFKTIEECKRTCAA.

An N-terminal signal peptide occupies residues 1–24 (MSSGGLLLLLGLLTLWEALTPVSS). Residues 31–81 (CELPEDSGPCKGLFHVFYYNPDQSQCLEFIYGGCYGNANNFKTIEECKRTC) form the BPTI/Kunitz inhibitor domain. 3 disulfide bridges follow: Cys31/Cys81, Cys40/Cys64, and Cys56/Cys77.

The protein belongs to the venom Kunitz-type family. As to expression, expressed by the venom gland.

The protein localises to the secreted. In terms of biological role, serine protease inhibitor. The polypeptide is Kunitz-type serine protease inhibitor nigrescinin-2 (Cryptophis nigrescens (Eastern small-eyed snake)).